Reading from the N-terminus, the 257-residue chain is Transmembrane protein C257L (257 aa).

The next 2 helical transmembrane spans lie at 123–143 (LELL…FTAL) and 163–183 (IMIF…YVLV).

This sequence belongs to the asfivirus C257R family.

Its subcellular location is the host membrane. It is found in the virion. In African swine fever virus (isolate Pig/Kenya/KEN-50/1950) (ASFV), this protein is Transmembrane protein C257L.